A 101-amino-acid polypeptide reads, in one-letter code: NAD(P)H-quinone oxidoreductase subunit 4L, chloroplastic (101 aa).

Transmembrane regions (helical) follow at residues 2–22, 32–52, and 61–81; these read MLEY…YGLI, MCLE…SDLF, and IFSI…PAIV.

It belongs to the complex I subunit 4L family. NDH is composed of at least 16 different subunits, 5 of which are encoded in the nucleus.

The protein resides in the plastid. The protein localises to the chloroplast thylakoid membrane. The enzyme catalyses a plastoquinone + NADH + (n+1) H(+)(in) = a plastoquinol + NAD(+) + n H(+)(out). It catalyses the reaction a plastoquinone + NADPH + (n+1) H(+)(in) = a plastoquinol + NADP(+) + n H(+)(out). Functionally, NDH shuttles electrons from NAD(P)H:plastoquinone, via FMN and iron-sulfur (Fe-S) centers, to quinones in the photosynthetic chain and possibly in a chloroplast respiratory chain. The immediate electron acceptor for the enzyme in this species is believed to be plastoquinone. Couples the redox reaction to proton translocation, and thus conserves the redox energy in a proton gradient. The chain is NAD(P)H-quinone oxidoreductase subunit 4L, chloroplastic from Acorus calamus var. americanus (American sweet flag).